The chain runs to 358 residues: RuBisCO accumulation factor 1 (358 aa).

The N-terminal alpha-helix stretch occupies residues Val11–Asp194. The segment at Ala218–Ile344 is C-terminal beta-sheet.

It belongs to the RAF family. Homodimer. Forms an RbcL(8)-Raf1(8) complex. Forms complexes of many stoichiometries with RbcL with and without RbcS. RbcX and Raf1 can bind simultaneously to RbcL. Interacts with both RuBisCO subunits (ccbL, ccbS), GroEL, DnaK and alpha and beta phycocyanin (cpcA, cpcB) in pull-down experiments with tagged protein. C-terminally tagged Raf1 does not interact with either RuBisCO subunit, suggesting its C-terminus is involved in binding.

It is found in the cytoplasm. A major RuBisCO chaperone. Acts after GroEL-GroES chaperonin to fold and/or assemble the large subunit of RuBisCO (ccbL, rbcL). Cooperates with RbcX in RbcL folding, plays the major role in assembly of dimers into RbcL(8)-Raf1(8) intermediate complexes. RbcS replaces Raf1, leading to holoenzyme formation. Its function is as follows. Required for optimal reconstitution of RbcL(8) upon expression in E.coli. Has been suggested to be involved in RuBisCO recycling and homeostasis rather than assembly. The sequence is that of RuBisCO accumulation factor 1 from Synechocystis sp. (strain ATCC 27184 / PCC 6803 / Kazusa).